Here is a 287-residue protein sequence, read N- to C-terminus: MLLFINRFAKTIILLFGMLVFLVLLGLGGAALYFKDNAAKLYIDTRKSIDSSFDSSQAFIDTYNGSSSKFSVESINKQIEEVKKKVEESTKKLEEYEKQINQAKGLNGYLVSPEKLKELQEAKKSLQATKSQIEKYANTLKTANNGKTGQNGTSSSTIPITKISGSTISVSTRDTNGKTNSALKDIQEFSTQANDIIKQYKEIKNKIPTEKQFNEYYTIGAITLVSVSGGVLAVLIVSTVMTFLGSKKLGLRTFSRLTSTDQIADHVNDILDRYPELEDAVLEELDQ.

The next 2 membrane-spanning stretches (helical) occupy residues 12-32 and 217-237; these read IILL…GAAL and YTIG…VLIV.

Its subcellular location is the cell membrane. This is an uncharacterized protein from Mycoplasma pneumoniae (strain ATCC 29342 / M129 / Subtype 1) (Mycoplasmoides pneumoniae).